The primary structure comprises 219 residues: 2-hydroxy-3-keto-5-methylthiopentenyl-1-phosphate phosphatase (219 aa).

Belongs to the HAD-like hydrolase superfamily. MtnX family.

It carries out the reaction 2-hydroxy-5-methylsulfanyl-3-oxopent-1-enyl phosphate + H2O = 1,2-dihydroxy-5-(methylsulfanyl)pent-1-en-3-one + phosphate. Its pathway is amino-acid biosynthesis; L-methionine biosynthesis via salvage pathway; L-methionine from S-methyl-5-thio-alpha-D-ribose 1-phosphate: step 4/6. Dephosphorylates 2-hydroxy-3-keto-5-methylthiopentenyl-1-phosphate (HK-MTPenyl-1-P) yielding 1,2-dihydroxy-3-keto-5-methylthiopentene (DHK-MTPene). This chain is 2-hydroxy-3-keto-5-methylthiopentenyl-1-phosphate phosphatase, found in Exiguobacterium sibiricum (strain DSM 17290 / CCUG 55495 / CIP 109462 / JCM 13490 / 255-15).